The following is a 286-amino-acid chain: Nucleotide-binding protein HS_1178 (286 aa).

8-15 (GRSGAGKS) provides a ligand contact to ATP. 56-59 (DIRN) provides a ligand contact to GTP.

The protein belongs to the RapZ-like family.

Its function is as follows. Displays ATPase and GTPase activities. The chain is Nucleotide-binding protein HS_1178 from Histophilus somni (strain 129Pt) (Haemophilus somnus).